The following is a 168-amino-acid chain: Endoribonuclease YbeY (168 aa).

Zn(2+)-binding residues include His126, His130, and His136.

This sequence belongs to the endoribonuclease YbeY family. It depends on Zn(2+) as a cofactor.

It is found in the cytoplasm. In terms of biological role, single strand-specific metallo-endoribonuclease involved in late-stage 70S ribosome quality control and in maturation of the 3' terminus of the 16S rRNA. In Rhizobium meliloti (strain 1021) (Ensifer meliloti), this protein is Endoribonuclease YbeY.